Here is a 32-residue protein sequence, read N- to C-terminus: MVGEIVESAVLSSVLVLVGLAIGFLLLKVQGE.

A helical transmembrane segment spans residues 9–27; the sequence is AVLSSVLVLVGLAIGFLLL.

It belongs to the PetM family. The 4 large subunits of the cytochrome b6-f complex are cytochrome b6, subunit IV (17 kDa polypeptide, PetD), cytochrome f and the Rieske protein, while the 4 small subunits are PetG, PetL, PetM and PetN. The complex functions as a dimer.

The protein resides in the plastid. Its subcellular location is the chloroplast thylakoid membrane. Functionally, component of the cytochrome b6-f complex, which mediates electron transfer between photosystem II (PSII) and photosystem I (PSI), cyclic electron flow around PSI, and state transitions. This Pyropia yezoensis (Susabi-nori) protein is Cytochrome b6-f complex subunit 7.